Here is a 462-residue protein sequence, read N- to C-terminus: Squalene synthase ERG9 (462 aa).

The helical transmembrane segment at 406–426 (AVVLFGVVIAALVCISGLMLG) threads the bilayer.

This sequence belongs to the phytoene/squalene synthase family. It depends on Mg(2+) as a cofactor.

The protein resides in the endoplasmic reticulum membrane. Its subcellular location is the microsome. The catalysed reaction is 2 (2E,6E)-farnesyl diphosphate + NADPH + H(+) = squalene + 2 diphosphate + NADP(+). The enzyme catalyses 2 (2E,6E)-farnesyl diphosphate + NADH + H(+) = squalene + 2 diphosphate + NAD(+). The protein operates within terpene metabolism; lanosterol biosynthesis; lanosterol from farnesyl diphosphate: step 1/3. It participates in steroid metabolism; ergosterol biosynthesis. Its function is as follows. Squalene synthase; part of the third module of ergosterol biosynthesis pathway that includes the late steps of the pathway. ERG9 produces squalene from 2 farnesyl pyrophosphate moieties. The third module or late pathway involves the ergosterol synthesis itself through consecutive reactions that mainly occur in the endoplasmic reticulum (ER) membrane. Firstly, the squalene synthase ERG9 catalyzes the condensation of 2 farnesyl pyrophosphate moieties to form squalene, which is the precursor of all steroids. Squalene synthase is crucial for balancing the incorporation of farnesyl diphosphate (FPP) into sterol and nonsterol isoprene synthesis. Secondly, squalene is converted into lanosterol by the consecutive action of the squalene epoxidase ERG1 and the lanosterol synthase ERG7. Then, the delta(24)-sterol C-methyltransferase ERG6 methylates lanosterol at C-24 to produce eburicol. Eburicol is the substrate of the sterol 14-alpha demethylase encoded by CYP51A, CYP51B and CYP51C, to yield 4,4,24-trimethyl ergosta-8,14,24(28)-trienol. CYP51B encodes the enzyme primarily responsible for sterol 14-alpha-demethylation, and plays an essential role in ascospore formation. CYP51A encodes an additional sterol 14-alpha-demethylase, induced on ergosterol depletion and responsible for the intrinsic variation in azole sensitivity. The third CYP51 isoform, CYP51C, does not encode a sterol 14-alpha-demethylase, but is required for full virulence on host wheat ears. The C-14 reductase ERG24 then reduces the C14=C15 double bond which leads to 4,4-dimethylfecosterol. A sequence of further demethylations at C-4, involving the C-4 demethylation complex containing the C-4 methylsterol oxidases ERG25, the sterol-4-alpha-carboxylate 3-dehydrogenase ERG26 and the 3-keto-steroid reductase ERG27, leads to the production of fecosterol via 4-methylfecosterol. ERG28 has a role as a scaffold to help anchor ERG25, ERG26 and ERG27 to the endoplasmic reticulum. The C-8 sterol isomerase ERG2 then catalyzes the reaction which results in unsaturation at C-7 in the B ring of sterols and thus converts fecosterol to episterol. The sterol-C5-desaturases ERG3A and ERG3BB then catalyze the introduction of a C-5 double bond in the B ring to produce 5-dehydroepisterol. The C-22 sterol desaturases ERG5A and ERG5B further convert 5-dehydroepisterol into ergosta-5,7,22,24(28)-tetraen-3beta-ol by forming the C-22(23) double bond in the sterol side chain. Finally, ergosta-5,7,22,24(28)-tetraen-3beta-ol is substrate of the C-24(28) sterol reductase ERG4 to produce ergosterol. This chain is Squalene synthase ERG9, found in Gibberella zeae (strain ATCC MYA-4620 / CBS 123657 / FGSC 9075 / NRRL 31084 / PH-1) (Wheat head blight fungus).